The following is a 198-amino-acid chain: 7-methyl-GTP pyrophosphatase (198 aa).

Residue D72 is the Proton acceptor of the active site.

It belongs to the Maf family. YceF subfamily. Requires a divalent metal cation as cofactor.

The protein resides in the cytoplasm. The catalysed reaction is N(7)-methyl-GTP + H2O = N(7)-methyl-GMP + diphosphate + H(+). Nucleoside triphosphate pyrophosphatase that hydrolyzes 7-methyl-GTP (m(7)GTP). May have a dual role in cell division arrest and in preventing the incorporation of modified nucleotides into cellular nucleic acids. The sequence is that of 7-methyl-GTP pyrophosphatase from Idiomarina loihiensis (strain ATCC BAA-735 / DSM 15497 / L2-TR).